Here is a 508-residue protein sequence, read N- to C-terminus: Anthranilate synthase component 1 (508 aa).

L-tryptophan contacts are provided by residues serine 51 and 283–285 (PYM). A chorismate-binding site is contributed by 323-324 (GT). Glutamate 350 contributes to the Mg(2+) binding site. Residues tyrosine 438, arginine 458, 477–479 (GAG), and glycine 479 contribute to the chorismate site. A Mg(2+)-binding site is contributed by glutamate 492.

It belongs to the anthranilate synthase component I family. Heterotetramer consisting of two non-identical subunits: a beta subunit (TrpG) and a large alpha subunit (TrpE). It depends on Mg(2+) as a cofactor.

The enzyme catalyses chorismate + L-glutamine = anthranilate + pyruvate + L-glutamate + H(+). It functions in the pathway amino-acid biosynthesis; L-tryptophan biosynthesis; L-tryptophan from chorismate: step 1/5. With respect to regulation, feedback inhibited by tryptophan. Part of a heterotetrameric complex that catalyzes the two-step biosynthesis of anthranilate, an intermediate in the biosynthesis of L-tryptophan. In the first step, the glutamine-binding beta subunit (TrpG) of anthranilate synthase (AS) provides the glutamine amidotransferase activity which generates ammonia as a substrate that, along with chorismate, is used in the second step, catalyzed by the large alpha subunit of AS (TrpE) to produce anthranilate. In the absence of TrpG, TrpE can synthesize anthranilate directly from chorismate and high concentrations of ammonia. The protein is Anthranilate synthase component 1 (trpE) of Synechocystis sp. (strain ATCC 27184 / PCC 6803 / Kazusa).